Consider the following 577-residue polypeptide: Cell pattern formation-associated protein stuA (577 aa).

The interval 1-41 (MNQPQPYMDQHAPAPPPASNMTQYSNYGAPQPLQPATHGYG) is disordered. A compositionally biased stretch (polar residues) spans 19–28 (SNMTQYSNYG). In terms of domain architecture, HTH APSES-type spans 111 to 217 (RVTATLWEDE…HNIGALLYHP (107 aa)). The segment at residues 145–166 (GTKLLNVAGMTRGRRDGILKSE) is a DNA-binding region (H-T-H motif). Disordered regions lie at residues 228 to 487 (ATMA…QLPS) and 518 to 577 (QYPA…AVRR). Polar residues-rich tracts occupy residues 238-251 (SQEY…TQAP) and 319-333 (AVNS…SQGM). Residues 334–350 (PQYQTSQPPYTQSYSTP) show a composition bias toward low complexity. Residues 351–364 (GSYSQPQYTHQQPG) are compositionally biased toward polar residues. Over residues 390–399 (AENDHPDHKV) the composition is skewed to basic and acidic residues. The segment covering 465 to 479 (TPRTTNPYTGYNNTP) has biased composition (low complexity). Residues 526-552 (KRGREDDDQVDPYGRPSSALGEHKRQR) form a nuclear localization domain region.

This sequence belongs to the EFG1/PHD1/stuA family.

It localises to the nucleus. Its function is as follows. Transcription factor that regulates asexual reproduction. Binds the StuA-response elements (StRE) with the consensus sequence 5'-(A/T)CGCG(T/A)N(A/C)-3' at the promoters of target genes. This Dothistroma septosporum (strain NZE10 / CBS 128990) (Red band needle blight fungus) protein is Cell pattern formation-associated protein stuA.